The following is a 503-amino-acid chain: 3-octaprenyl-4-hydroxybenzoate carboxy-lyase (503 aa).

Residue N176 coordinates Mn(2+). Prenylated FMN-binding positions include 179-181, 193-195, and 198-199; these read IYR, RWL, and RG. E242 contributes to the Mn(2+) binding site. The Proton donor role is filled by D303.

It belongs to the UbiD family. As to quaternary structure, homohexamer. The cofactor is prenylated FMN. Mn(2+) serves as cofactor.

It localises to the cell membrane. The catalysed reaction is a 4-hydroxy-3-(all-trans-polyprenyl)benzoate + H(+) = a 2-(all-trans-polyprenyl)phenol + CO2. The protein operates within cofactor biosynthesis; ubiquinone biosynthesis. Functionally, catalyzes the decarboxylation of 3-octaprenyl-4-hydroxy benzoate to 2-octaprenylphenol, an intermediate step in ubiquinone biosynthesis. The sequence is that of 3-octaprenyl-4-hydroxybenzoate carboxy-lyase from Ralstonia nicotianae (strain ATCC BAA-1114 / GMI1000) (Ralstonia solanacearum).